We begin with the raw amino-acid sequence, 71 residues long: Brevinin-1HN1 (71 aa).

A signal peptide spans 1–22; that stretch reads MFTSKKPLLLLFFLGTINLSLC. The propeptide occupies 23 to 45; the sequence is EQERDADEEERRDDPDERDVEVE. An intrachain disulfide couples Cys65 to Cys71.

As to expression, expressed by the skin glands.

The protein localises to the secreted. Has antimicrobial activity against Gram-positive bacteria and fungi but has weak or no activity against a range of Gram-negative bacteria except P.faecalis. Active against the Gram-positive bacteria E.faecium 091299 (MIC=19 uM), E.faecalis 981 (MIC=19 uM), S.aureus ATCC 25923 (MIC=1.2 uM), S.carnosus KHS (MIC=4.8 uM), B.licheniformis X39 (MIC=2.4 uM) and R.rhodochrous X15 (MIC=1.2 uM). Active against the Gram-negative bacterium P.faecalis X29 (MIC=4.8 uM), is virtually inactive against E.coli ATCC 25922 (MIC=150 uM) and inactive against P.aeruginosa and S.typhi. Has antifungal activity against C.albicans ATCC 2002 (MIC=2.4 uM) and is also active against the slime mold 090223 (MIC=1.2 uM). Has low hemolytic activity against human erythrocytes (LC(50)=75 uM). This Odorrana hainanensis (Odor frog) protein is Brevinin-1HN1.